The primary structure comprises 159 residues: ATP synthase subunit b 2 (159 aa).

Residues 1–21 (MDATFWALVALIIFVGILLYM) form a helical membrane-spanning segment.

This sequence belongs to the ATPase B chain family. F-type ATPases have 2 components, F(1) - the catalytic core - and F(0) - the membrane proton channel. F(1) has five subunits: alpha(3), beta(3), gamma(1), delta(1), epsilon(1). F(0) has three main subunits: a(1), b(2) and c(10-14). The alpha and beta chains form an alternating ring which encloses part of the gamma chain. F(1) is attached to F(0) by a central stalk formed by the gamma and epsilon chains, while a peripheral stalk is formed by the delta and b chains.

The protein localises to the cell inner membrane. F(1)F(0) ATP synthase produces ATP from ADP in the presence of a proton or sodium gradient. F-type ATPases consist of two structural domains, F(1) containing the extramembraneous catalytic core and F(0) containing the membrane proton channel, linked together by a central stalk and a peripheral stalk. During catalysis, ATP synthesis in the catalytic domain of F(1) is coupled via a rotary mechanism of the central stalk subunits to proton translocation. In terms of biological role, component of the F(0) channel, it forms part of the peripheral stalk, linking F(1) to F(0). This is ATP synthase subunit b 2 from Chelativorans sp. (strain BNC1).